The primary structure comprises 463 residues: Glycine--tRNA ligase (463 aa).

Positions 98 and 174 each coordinate substrate. Residues 206-208 (RNE), 216-221 (FRTREF), 290-291 (EL), and 334-337 (GADR) each bind ATP. Residue 221–225 (FEQME) participates in substrate binding. 330–334 (EPSLG) provides a ligand contact to substrate.

This sequence belongs to the class-II aminoacyl-tRNA synthetase family. Homodimer.

It localises to the cytoplasm. The enzyme catalyses tRNA(Gly) + glycine + ATP = glycyl-tRNA(Gly) + AMP + diphosphate. Catalyzes the attachment of glycine to tRNA(Gly). In Staphylococcus aureus (strain bovine RF122 / ET3-1), this protein is Glycine--tRNA ligase.